A 641-amino-acid polypeptide reads, in one-letter code: DNA primase (641 aa).

The CHC2-type zinc finger occupies 41–65 (CPFHDEKSPSFQVSPSKGFFHCFGC). The region spanning 262–346 (SRAVVVEGYT…AAETYIAIAP (85 aa)) is the Toprim domain. Mg(2+) contacts are provided by Glu-268, Asp-317, and Asp-319. A disordered region spans residues 444 to 478 (RDRGGKGPAPDQRQRGGGPQQQAGPMTATPRGPAL).

The protein belongs to the DnaG primase family. Monomer. Interacts with DnaB. Requires Zn(2+) as cofactor. It depends on Mg(2+) as a cofactor.

It carries out the reaction ssDNA + n NTP = ssDNA/pppN(pN)n-1 hybrid + (n-1) diphosphate.. Its function is as follows. RNA polymerase that catalyzes the synthesis of short RNA molecules used as primers for DNA polymerase during DNA replication. In Streptomyces coelicolor (strain ATCC BAA-471 / A3(2) / M145), this protein is DNA primase.